A 123-amino-acid chain; its full sequence is Large ribosomal subunit protein eL8 (123 aa).

Belongs to the eukaryotic ribosomal protein eL8 family. In terms of assembly, part of the 50S ribosomal subunit. Probably part of the RNase P complex.

The protein localises to the cytoplasm. Functionally, multifunctional RNA-binding protein that recognizes the K-turn motif in ribosomal RNA, the RNA component of RNase P, box H/ACA, box C/D and box C'/D' sRNAs. This is Large ribosomal subunit protein eL8 from Methanothermobacter thermautotrophicus (strain ATCC 29096 / DSM 1053 / JCM 10044 / NBRC 100330 / Delta H) (Methanobacterium thermoautotrophicum).